Consider the following 194-residue polypeptide: Cysteine and glycine-rich protein 3 (194 aa).

The interval 1–5 (MPNWG) is interaction with TCAP. The 52-residue stretch at 10 to 61 (CGACDKTVYHAEEIQCNGRSFHKTCFHCMACRKALDSTTVAAHESEIYCKVC) folds into the LIM zinc-binding 1 domain. The short motif at 64 to 69 (RKYGPK) is the Nuclear localization signal element. An interaction with CLF2 region spans residues 94-105 (QSPKPARAATTS). 3 positions are modified to phosphoserine: serine 95, serine 111, and serine 153. Residues 120–171 (CPRCGKSVYAAEKVMGGGKPWHKTCFPCAICGKSLESTNVTDKDGELYCKVC) enclose the LIM zinc-binding 2 domain.

Self-associates. Oligomeric in the cytoplasm and monomeric in the nucleus. Homooligomers preferentially form along the actin cytoskeleton. Interacts with TCAP, ACTN2 and NRAP. Interacts with LDHD, SPTB, MYOD1, MYOG, MYF6. Interacts with GLRX3 (via C-terminus); GLRX3 and calcineurin compete for interaction with CSRP3. Interacts with CFL2; the stoichiometry influences F-actin depolymerization and possibly two molecules of CFL2 can interact with one molecule of CSRP3 resulting in the highest functional impact; the interaction is stronger with phosphorylated CFL2. In terms of processing, phosphorylated by PKC/PRKCA. As to expression, high in striated muscle and adult heart.

It localises to the nucleus. It is found in the cytoplasm. The protein localises to the cytoskeleton. The protein resides in the myofibril. Its subcellular location is the sarcomere. It localises to the z line. Positive regulator of myogenesis. Acts as a cofactor for myogenic bHLH transcription factors such as MYOD1, and probably MYOG and MYF6. Enhances the DNA-binding activity of the MYOD1:TCF3 isoform E47 complex and may promote formation of a functional MYOD1:TCF3 isoform E47:MEF2A complex involved in myogenesis. Plays a crucial and specific role in the organization of cytosolic structures in cardiomyocytes. Could play a role in mechanical stretch sensing. May be a scaffold protein that promotes the assembly of interacting proteins at Z-line structures. It is essential for calcineurin anchorage to the Z line. Required for stress-induced calcineurin-NFAT activation. The role in regulation of cytoskeleton dynamics by association with CFL2 is reported conflictingly. Proposed to contribute to the maintenance of muscle cell integrity through an actin-based mechanism. Can directly bind to actin filaments, cross-link actin filaments into bundles without polarity selectivity and protect them from dilution- and cofilin-mediated depolymerization; the function seems to involve its self-association. In vitro can inhibit PKC/PRKCA activity. Proposed to be involved in cardiac stress signaling by down-regulating excessive PKC/PRKCA signaling. The protein is Cysteine and glycine-rich protein 3 (Csrp3) of Rattus norvegicus (Rat).